We begin with the raw amino-acid sequence, 412 residues long: MPSSISWGLLLLAGLCCLAPGSLAGDAQETDASKDDHEHPACHKIAPNLAEFAFDLYRVLARQSNTTNIFFSPVSVATALAALSLGTKGDTHTQILEGLDFNLTEMAETDIHQGFQHLLQTLNRPNNQLQLTTGNGLFIDQSLKLADKFLEDVKNLYHSEAFSTNFTDSEEAKKQINGYVEKGTQGKIVDAVKTLDKNTVFALVNYIFFKGKWEKPFEVEHTTEGDFHVDQATTVKVPMMNRLGRFDLLYCTTLASWVLQMDYLGNATAIFLLPDEGKLQHLEDTITKEILSKFLKNRHTRTVNLYFPKLSITGTYDLRSVLSTLGITKVFSNEADLSGVTEEAPLKLSKGVHKAVLTIDERGTEAAGVTVLEAIPMSLPPDVRFDRPFLIIIYEHYTKSPLFVGKVVNPTQ.

A signal peptide spans 1–24; sequence MPSSISWGLLLLAGLCCLAPGSLA. A Phosphoserine modification is found at S33. N65, N102, N165, and N266 each carry an N-linked (GlcNAc...) asparagine glycan. Residues 368-387 form an RCL region; that stretch reads GVTVLEAIPMSLPPDVRFDR. A Phosphoserine modification is found at S378.

Belongs to the serpin family. Interacts with CELA2A. Interacts with ERGIC3 and LMAN1/ERGIC53. Interacts with PRSS1/Trypsin. Plasma.

It localises to the secreted. In terms of biological role, inhibitor of serine proteases. The protein is Alpha-1-antiproteinase of Callosciurus caniceps (Gray-bellied squirrel).